A 143-amino-acid polypeptide reads, in one-letter code: Transcriptional regulator MraZ (143 aa).

SpoVT-AbrB domains are found at residues 5 to 47 and 76 to 119; these read TYTP…PRDE and TDEQ…DAQA.

The protein belongs to the MraZ family. As to quaternary structure, forms oligomers.

The protein resides in the cytoplasm. The protein localises to the nucleoid. This chain is Transcriptional regulator MraZ, found in Mycolicibacterium smegmatis (strain ATCC 700084 / mc(2)155) (Mycobacterium smegmatis).